Here is a 113-residue protein sequence, read N- to C-terminus: MTEVVGFWESVSDDESEDKDCMEVQNTVSADESPLVQSLVSFVGSCSINLLLPFLNGMMLGFGELFAHELCWRFNWFNHRNKGYKVYPESRKIAALKEISSPGTRGRVASKFL.

The chain crosses the membrane as a helical span at residues 39 to 62 (LVSFVGSCSINLLLPFLNGMMLGF).

Belongs to the MIM1 family. In terms of assembly, component of the MIM complex containing at least MIM1 and MIM2. Interacts with MIM2; interaction is direct. Interacts with TOM70.

It localises to the mitochondrion outer membrane. In terms of biological role, component of the MIM complex required for mitochondrial outer membrane protein import. The MIM complex cooperates with the receptor TOM70 in binding of precursor proteins and promotes their insertion and assembly into the outer membrane. Involved in import of the subset of proteins with multiple alpha-helical transmembrane segments, including UGO1. Required for the assembly of the TOM (translocase of outer membrane) receptor complex, which is responsible for the recognition and translocation of cytosolically synthesized mitochondrial preproteins. Required specifically for assembly of TOM40, TOM20, and TOM70, but not TOM22. This chain is Mitochondrial import protein 1 (MIM1), found in Saccharomyces cerevisiae (strain ATCC 204508 / S288c) (Baker's yeast).